The primary structure comprises 847 residues: B-cell receptor CD22 (847 aa).

Positions 1-19 (MHLLGPWLLLLVLEYLAFS) are cleaved as a signal peptide. The region spanning 20–138 (DSSKWVFEHP…MERIHLNVSE (119 aa)) is the Ig-like V-type domain. At 20-687 (DSSKWVFEHP…YYSPETIGRR (668 aa)) the chain is on the extracellular side. Cystine bridges form between Cys-39-Cys-167, Cys-44-Cys-102, and Cys-161-Cys-219. N-linked (GlcNAc...) asparagine glycans are attached at residues Asn-67, Asn-101, and Asn-112. Residue Arg-120 coordinates N-acetylneuraminate. N-linked (GlcNAc...) asparagine glycans are attached at residues Asn-135, Asn-164, and Asn-231. 6 consecutive Ig-like C2-type domains span residues 143-235 (PHIQ…DTVQ), 242-326 (PKLE…VFLQ), 331-416 (PEPS…LDVQ), 419-500 (PKKV…VALN), 505-582 (PRDV…QTAS), and 593-676 (PRRL…STLT). Intrachain disulfides connect Cys-265-Cys-309, Cys-353-Cys-396, Cys-442-Cys-484, and Cys-529-Cys-571. Residues Asn-363, Asn-445, and Asn-479 are each glycosylated (N-linked (GlcNAc...) asparagine). 2 N-linked (GlcNAc...) asparagine glycosylation sites follow: Asn-574 and Asn-634. A disulfide bridge links Cys-616 with Cys-659. A helical transmembrane segment spans residues 688–706 (VAVGLGSCLAILILAICGL). Over 707-847 (KLQRRWKRTQ…ENVDYVILKH (141 aa)) the chain is Cytoplasmic. Ser-725, Ser-726, and Ser-729 each carry phosphoserine. 2 short sequence motifs (ITIM motif) span residues 760–765 (ISYTTL) and 794–799 (VTYSAL). At Tyr-762 the chain carries Phosphotyrosine. Residues Tyr-807, Tyr-822, and Tyr-842 each carry the phosphotyrosine modification. 2 consecutive short sequence motifs (ITIM motif) follow at residues 820–825 (IHYSEL) and 840–845 (VDYVIL).

Belongs to the immunoglobulin superfamily. SIGLEC (sialic acid binding Ig-like lectin) family. As to quaternary structure, predominantly monomer of isoform CD22-beta. Also found as heterodimer of isoform CD22-beta and a shorter isoform. Interacts with PTPN6/SHP-1, LYN, SYK, PIK3R1/PIK3R2 and PLCG1 upon phosphorylation. Interacts with GRB2, INPP5D and SHC1 upon phosphorylation. May form a complex with INPP5D/SHIP, GRB2 and SHC1. In terms of processing, phosphorylation of Tyr-762, Tyr-807 and Tyr-822 are involved in binding to SYK, GRB2 and SYK, respectively. Phosphorylation of Tyr-842 is involved in binding to SYK, PLCG2 and PIK3R1/PIK3R2. Phosphorylated on tyrosine residues by LYN. B-lymphocytes.

It is found in the cell membrane. Most highly expressed siglec (sialic acid-binding immunoglobulin-like lectin) on B-cells that plays a role in various aspects of B-cell biology including differentiation, antigen presentation, and trafficking to bone marrow. Binds to alpha 2,6-linked sialic acid residues of surface molecules such as CD22 itself, CD45 and IgM in a cis configuration. Can also bind to ligands on other cells as an adhesion molecule in a trans configuration. Acts as an inhibitory coreceptor on the surface of B-cells and inhibits B-cell receptor induced signaling, characterized by inhibition of the calcium mobilization and cellular activation. Mechanistically, the immunoreceptor tyrosine-based inhibitory motif domain is phosphorylated by the Src kinase LYN, which in turn leads to the recruitment of the protein tyrosine phosphatase 1/PTPN6, leading to the negative regulation of BCR signaling. If this negative signaling from is of sufficient strength, apoptosis of the B-cell can be induced. The polypeptide is B-cell receptor CD22 (Homo sapiens (Human)).